Reading from the N-terminus, the 264-residue chain is Tryptophan synthase alpha chain (264 aa).

Residues glutamate 49 and aspartate 60 each act as proton acceptor in the active site.

Belongs to the TrpA family. In terms of assembly, tetramer of two alpha and two beta chains.

The enzyme catalyses (1S,2R)-1-C-(indol-3-yl)glycerol 3-phosphate + L-serine = D-glyceraldehyde 3-phosphate + L-tryptophan + H2O. The protein operates within amino-acid biosynthesis; L-tryptophan biosynthesis; L-tryptophan from chorismate: step 5/5. Its function is as follows. The alpha subunit is responsible for the aldol cleavage of indoleglycerol phosphate to indole and glyceraldehyde 3-phosphate. This is Tryptophan synthase alpha chain from Microcystis aeruginosa (strain NIES-843 / IAM M-2473).